Reading from the N-terminus, the 841-residue chain is Outer membrane usher protein MyfC (841 aa).

An N-terminal signal peptide occupies residues 1-26 (MFFSLKNSVAKLIAFWAICLVLPVWA). Cysteines 817 and 840 form a disulfide.

It belongs to the fimbrial export usher family.

It is found in the cell outer membrane. Functionally, involved in the export and assembly of the MyfA fimbrial subunit. The protein is Outer membrane usher protein MyfC (myfC) of Yersinia enterocolitica.